Consider the following 1412-residue polypeptide: DNA-directed RNA polymerase subunit beta' (1412 aa).

4 residues coordinate Zn(2+): C70, C72, C85, and C88. Residues D460, D462, and D464 each coordinate Mg(2+). The Zn(2+) site is built by C819, C893, C900, and C903. The disordered stretch occupies residues 1391–1412 (AEESFEFGTPETPAAEQQHSGE).

It belongs to the RNA polymerase beta' chain family. In terms of assembly, the RNAP catalytic core consists of 2 alpha, 1 beta, 1 beta' and 1 omega subunit. When a sigma factor is associated with the core the holoenzyme is formed, which can initiate transcription. Requires Mg(2+) as cofactor. It depends on Zn(2+) as a cofactor.

The catalysed reaction is RNA(n) + a ribonucleoside 5'-triphosphate = RNA(n+1) + diphosphate. Its function is as follows. DNA-dependent RNA polymerase catalyzes the transcription of DNA into RNA using the four ribonucleoside triphosphates as substrates. This chain is DNA-directed RNA polymerase subunit beta', found in Paraburkholderia phytofirmans (strain DSM 17436 / LMG 22146 / PsJN) (Burkholderia phytofirmans).